The following is a 194-amino-acid chain: dTTP/UTP pyrophosphatase (194 aa).

The Proton acceptor role is filled by aspartate 73.

This sequence belongs to the Maf family. YhdE subfamily. A divalent metal cation is required as a cofactor.

It is found in the cytoplasm. The catalysed reaction is dTTP + H2O = dTMP + diphosphate + H(+). It carries out the reaction UTP + H2O = UMP + diphosphate + H(+). Functionally, nucleoside triphosphate pyrophosphatase that hydrolyzes dTTP and UTP. May have a dual role in cell division arrest and in preventing the incorporation of modified nucleotides into cellular nucleic acids. The sequence is that of dTTP/UTP pyrophosphatase from Clostridium botulinum (strain Kyoto / Type A2).